Reading from the N-terminus, the 273-residue chain is Elongation factor Ts (273 aa).

Residues 80–83 are involved in Mg(2+) ion dislocation from EF-Tu; sequence TDFV.

The protein belongs to the EF-Ts family.

The protein localises to the cytoplasm. Associates with the EF-Tu.GDP complex and induces the exchange of GDP to GTP. It remains bound to the aminoacyl-tRNA.EF-Tu.GTP complex up to the GTP hydrolysis stage on the ribosome. In Tropheryma whipplei (strain Twist) (Whipple's bacillus), this protein is Elongation factor Ts.